Consider the following 331-residue polypeptide: Sideroflexin-5 (331 aa).

Helical transmembrane passes span 104–126, 153–175, 243–265, and 278–300; these read PFGWITVTGMLLPNPSWPTLLFW, YIGAYGAAVTAACSISGGLTYFI, TTMVRAFLPVPLLLMPPCIMPYL, and HIFVNAIVCTLSFAVSLPVALAL.

This sequence belongs to the sideroflexin family.

It is found in the mitochondrion inner membrane. It carries out the reaction citrate(in) = citrate(out). In terms of biological role, mitochondrial amino-acid transporter. This is Sideroflexin-5 from Caenorhabditis elegans.